The chain runs to 117 residues: Nuclear transition protein 2 (117 aa).

Positions 1–117 are disordered; that stretch reads MDTKMQSLPT…KRRSSGRRYK (117 aa). Residues 7–26 show a composition bias toward low complexity; the sequence is SLPTTHPHPHSSSRPQSHTS. Residues His-12, His-14, His-16, His-24, Cys-32, Cys-34, Cys-38, and Cys-41 each contribute to the Zn(2+) site. Low complexity predominate over residues 44–53; that stretch reads AGHAGSSSSP. Basic residues-rich tracts occupy residues 60–77 and 93–117; these read KHPKPSVHSRHSPARPSH and SKRKAVRRRKRTHRAKRRSSGRRYK. Residues 90–98 carry the Nuclear localization signal motif; the sequence is GKVSKRKAV. Ser-112 bears the Phosphoserine mark.

This sequence belongs to the nuclear transition protein 2 family.

It localises to the nucleus. It is found in the chromosome. Functionally, plays a key role in the replacement of histones to protamine in the elongating spermatids of mammals. In condensing spermatids, loaded onto the nucleosomes, where it promotes the recruitment and processing of protamines, which are responsible for histone eviction. The histone H2AB1-H2BC1/TH2B dimer is required for loading of TNP2 onto chromatin. In Mus musculus (Mouse), this protein is Nuclear transition protein 2.